The primary structure comprises 451 residues: AP-4 complex subunit mu (451 aa).

The MHD domain maps to 184–450 (REEIFVDIIE…VTQANSYVAR (267 aa)).

It belongs to the adaptor complexes medium subunit family. In terms of assembly, adaptor protein complex 4 (AP-4) is a heterotetramer composed of two large adaptins (epsilon-type subunit and beta-type subunit), a medium adaptin (mu-type subunit) and a small adaptin (sigma-type subunit).

It localises to the golgi apparatus. The protein localises to the trans-Golgi network. The protein resides in the membrane. Its subcellular location is the coated pit. Functionally, subunit of novel type of clathrin- or non-clathrin-associated protein coat involved in targeting proteins from the trans-Golgi network (TGN) to the endosomal-lysosomal system. The protein is AP-4 complex subunit mu (AP4M) of Arabidopsis thaliana (Mouse-ear cress).